The chain runs to 151 residues: Cysteine proteinase inhibitor 10 (151 aa).

Positions 1–22 (MATSPMLFLVSLLLVLVAAATG) are cleaved as a signal peptide. The Cystatin domain occupies 40-109 (GGRTEIRDVG…GVAYYLKVAA (70 aa)). A Secondary area of contact motif is present at residues 96–100 (QVVSG).

This sequence belongs to the cystatin family. Phytocystatin subfamily.

It localises to the secreted. Specific inhibitor of cysteine proteinases. Probably involved in the regulation of endogenous processes and in defense against pests and pathogens. This is Cysteine proteinase inhibitor 10 from Oryza sativa subsp. indica (Rice).